A 359-amino-acid polypeptide reads, in one-letter code: Cysteine/Cysteine sulfinic acid decarboxylase (359 aa).

This sequence in the N-terminal section; belongs to the HFCD (homo-oligomeric flavin containing Cys decarboxylase) superfamily. The protein in the C-terminal section; belongs to the PPC synthetase family.

It catalyses the reaction L-cysteine + H(+) = cysteamine + CO2. The enzyme catalyses 3-sulfino-L-alanine + H(+) = hypotaurine + CO2. Its activity is regulated as follows. Slightly stimulated in the presence of 1 mM Mg(2+). Its function is as follows. Catalyzes the decarboxylation of L-cysteine to cysteamine and of 3-sulfino-L-alanine (cysteine sulfinic acid) to hypotaurine. Also catalyzes the decarboxylation of various amino acids such as L-lysine, L-glutamate, L-asparaginate and L-proline. In vitro, shows highest activity with L-cysteine as substrate. The polypeptide is Cysteine/Cysteine sulfinic acid decarboxylase (Unknown prokaryotic organism).